We begin with the raw amino-acid sequence, 154 residues long: MAIETAENRTPKVIEVTEIMNMLPHRYPFLLVDRVTDYEEGKWLRAIKNVTVNEPCFTGHFPSSPVFPGVLILEAMAQATGVLAVATYGKMREDELYYFAAIDNARFKRPVVPGDQLVLEVEFLKEIRGITKFTGKAYVNGKLACEADLMCARK.

The active site involves H60.

It belongs to the thioester dehydratase family. FabZ subfamily.

It localises to the cytoplasm. It carries out the reaction a (3R)-hydroxyacyl-[ACP] = a (2E)-enoyl-[ACP] + H2O. Its function is as follows. Involved in unsaturated fatty acids biosynthesis. Catalyzes the dehydration of short chain beta-hydroxyacyl-ACPs and long chain saturated and unsaturated beta-hydroxyacyl-ACPs. This Haemophilus ducreyi (strain 35000HP / ATCC 700724) protein is 3-hydroxyacyl-[acyl-carrier-protein] dehydratase FabZ.